The following is a 908-amino-acid chain: Glutamate receptor ionotropic, kainate 2 (908 aa).

The N-terminal stretch at 1–31 (MQRIAGITKMVTHRRWLGLLLLLLCVGYSHG) is a signal peptide. Over 32–561 (MPHVLRFGGI…VFSFLNPLSP (530 aa)) the chain is Extracellular. Asn67, Asn73, Asn275, Asn378, Asn412, Asn423, and Asn430 each carry an N-linked (GlcNAc...) asparagine glycan. A disulfide bridge connects residues Cys96 and Cys347. Positions 516, 518, and 523 each coordinate L-glutamate. Asn546 is a glycosylation site (N-linked (GlcNAc...) asparagine). A helical membrane pass occupies residues 562–582 (DIWMYILLAYLGVSCVLFVIA). Topologically, residues 583–638 (RFSPYEWYNPHPCNPDSDVVENNFTLLNSFWFGVGALMQQGSELMPKALSTRIVGG) are cytoplasmic. Residues 639 to 659 (IWWFFTLIIISSYTANLAAFL) traverse the membrane as a helical segment. Residues 660-819 (TVERMESPID…KEASALGVQN (160 aa)) lie on the Extracellular side of the membrane. L-glutamate contacts are provided by Ser689, Thr690, and Glu738. A disulfide bond links Cys750 and Cys804. An N-linked (GlcNAc...) asparagine glycan is attached at Asn751. A helical transmembrane segment spans residues 820 to 840 (IGGIFIVLAAGLVLSVFVAVG). Residues 841-908 (EFLYKSKQNA…RRLPGKETMA (68 aa)) are Cytoplasmic-facing.

Belongs to the glutamate-gated ion channel (TC 1.A.10.1) family. GRIK2 subfamily. Homotetramer and heterotetramer with GRIK5. Tetramers may be formed by the dimerization of dimers.

The protein localises to the cell membrane. Its subcellular location is the postsynaptic cell membrane. It catalyses the reaction Ca(2+)(in) = Ca(2+)(out). It carries out the reaction Na(+)(in) = Na(+)(out). Its activity is regulated as follows. Cold receptor activity activated by temperatures between 10-19 degrees Celsius. Its function is as follows. Ionotropic glutamate receptor that functions as a cation-permeable ligand-gated ion channel, gated by L-glutamate and the glutamatergic agonist kainic acid. L-glutamate acts as an excitatory neurotransmitter at many synapses in the central nervous system. Binding of the excitatory neurotransmitter L-glutamate induces a conformation change, leading to the opening of the cation channel, and thereby converts the chemical signal to an electrical impulse. The receptor then desensitizes rapidly and enters a transient inactive state, characterized by the presence of bound agonist. In terms of biological role, independent of its ionotropic glutamate receptor activity, acts as a thermoreceptor conferring sensitivity to cold temperatures. Functions in dorsal root ganglion neurons. The chain is Glutamate receptor ionotropic, kainate 2 from Danio rerio (Zebrafish).